We begin with the raw amino-acid sequence, 127 residues long: UPF0251 protein Ccel_0627 (127 aa).

This sequence belongs to the UPF0251 family.

This is UPF0251 protein Ccel_0627 from Ruminiclostridium cellulolyticum (strain ATCC 35319 / DSM 5812 / JCM 6584 / H10) (Clostridium cellulolyticum).